The primary structure comprises 249 residues: Leucyl/phenylalanyl-tRNA--protein transferase (249 aa).

Belongs to the L/F-transferase family.

The protein resides in the cytoplasm. It carries out the reaction N-terminal L-lysyl-[protein] + L-leucyl-tRNA(Leu) = N-terminal L-leucyl-L-lysyl-[protein] + tRNA(Leu) + H(+). The enzyme catalyses N-terminal L-arginyl-[protein] + L-leucyl-tRNA(Leu) = N-terminal L-leucyl-L-arginyl-[protein] + tRNA(Leu) + H(+). The catalysed reaction is L-phenylalanyl-tRNA(Phe) + an N-terminal L-alpha-aminoacyl-[protein] = an N-terminal L-phenylalanyl-L-alpha-aminoacyl-[protein] + tRNA(Phe). Functions in the N-end rule pathway of protein degradation where it conjugates Leu, Phe and, less efficiently, Met from aminoacyl-tRNAs to the N-termini of proteins containing an N-terminal arginine or lysine. The sequence is that of Leucyl/phenylalanyl-tRNA--protein transferase from Cupriavidus metallidurans (strain ATCC 43123 / DSM 2839 / NBRC 102507 / CH34) (Ralstonia metallidurans).